Here is a 336-residue protein sequence, read N- to C-terminus: UPF0324 membrane protein lp_2841 (336 aa).

The next 9 helical transmembrane spans lie at 5–22 (GILP…ISQG), 26–48 (FVPA…NTFL), 84–106 (IGGF…ALWL), 116–138 (VRML…IAPV), 150–172 (ITLV…MAVF), 204–226 (TVQF…VLIF), 255–277 (WYVA…AIIG), 282–304 (TISS…LVNF), and 311–333 (LALY…ITLL).

It belongs to the UPF0324 family.

The protein resides in the cell membrane. This is UPF0324 membrane protein lp_2841 from Lactiplantibacillus plantarum (strain ATCC BAA-793 / NCIMB 8826 / WCFS1) (Lactobacillus plantarum).